A 477-amino-acid polypeptide reads, in one-letter code: MSMRIGNETFKQAVKTELKDDFMRGAVSSAQDRLRERKLKTQEDLGNWEEWRDHSEEIRQHTLANLDYYLNMLSENVAAKGGHVFFAETAEEANQYVQKVLRDKNAKKVAKSKSMVTEEIGLNEAMEAVGCEVIETDLGEYILQVDDHNPPSHIVVPALHLNKEQIEKVFKEKLGYDKSSQPEELALFARQKLREEFLSADVGVTGCNFGVAESGSFSLVTNEGNARMVTTLPKTQITVMGMERLVPTHEELEVLVSMLTRSAVGQKLTSYVTTLTGPRAEDEIDGPEEFHLIIVDNGRSKILGTQFQSILQCIRCAACVNVCPVYRQTGGHSYGSIYPGPIGAVLSPLLGGYDTYKELPYASTLCGACTEACPVKIPLHDLLLEHRRVIVEEEHMSPVAERLVMKGFAQGASHSTLFKYGTKAAPALMSPFENKDKGMITKGPKPLQAWTNSRDFPMPDDENFRDWMQNRLKRGAK.

2 consecutive 4Fe-4S ferredoxin-type domains span residues Gly304 to Tyr334 and Tyr353 to Leu382. Residues Cys313, Cys316, Cys319, Cys323, Cys366, Cys369, and Cys373 each contribute to the [4Fe-4S] cluster site. Positions Gly443 to Asn463 are disordered.

The protein belongs to the LutB/YkgF family.

In terms of biological role, is involved in L-lactate degradation and allows cells to grow with lactate as the sole carbon source. Has probably a role as an electron transporter during oxidation of L-lactate. The sequence is that of Lactate utilization protein B from Macrococcus caseolyticus (strain JCSC5402) (Macrococcoides caseolyticum).